A 519-amino-acid polypeptide reads, in one-letter code: Acetylcholine receptor subunit gamma (519 aa).

An N-terminal signal peptide occupies residues 1–22 (MCGGQRPLFLLPLLAVCLGAKG). Over 23–240 (RNQEERLLGD…VVFYLLIQRK (218 aa)) the chain is Extracellular. Asparagine 52 and asparagine 163 each carry an N-linked (GlcNAc...) asparagine glycan. Residues cysteine 150 and cysteine 164 are joined by a disulfide bond. The next 3 membrane-spanning stretches (helical) occupy residues 241–265 (PLFY…IYFL), 274–292 (CTVA…FLVA), and 308–329 (YLTF…VLNV). Residues 330-476 (SLRSPHTHSM…WFLVGRVLDR (147 aa)) are Cytoplasmic-facing. Residues 477–497 (VCFLAMLSLFVCGTAGIFLMA) traverse the membrane as a helical segment.

The protein belongs to the ligand-gated ion channel (TC 1.A.9) family. Acetylcholine receptor (TC 1.A.9.1) subfamily. Gamma/CHRNG sub-subfamily. As to quaternary structure, pentamer of two alpha chains, and one each of the beta, delta, and gamma (in immature muscle) or epsilon (in mature muscle) chains.

The protein localises to the postsynaptic cell membrane. Its subcellular location is the cell membrane. It carries out the reaction K(+)(in) = K(+)(out). It catalyses the reaction Na(+)(in) = Na(+)(out). In terms of biological role, after binding acetylcholine, the AChR responds by an extensive change in conformation that affects all subunits and leads to opening of an ion-conducting channel across the plasma membrane. The sequence is that of Acetylcholine receptor subunit gamma (CHRNG) from Bos taurus (Bovine).